We begin with the raw amino-acid sequence, 293 residues long: Probable porphobilinogen deaminase (293 aa).

Position 233 is an S-(dipyrrolylmethanemethyl)cysteine (Cys233).

This sequence belongs to the HMBS family. Requires dipyrromethane as cofactor.

It catalyses the reaction 4 porphobilinogen + H2O = hydroxymethylbilane + 4 NH4(+). It functions in the pathway porphyrin-containing compound metabolism; protoporphyrin-IX biosynthesis; coproporphyrinogen-III from 5-aminolevulinate: step 2/4. Functionally, tetrapolymerization of the monopyrrole PBG into the hydroxymethylbilane pre-uroporphyrinogen in several discrete steps. This is Probable porphobilinogen deaminase from Saccharolobus islandicus (strain M.16.27) (Sulfolobus islandicus).